The sequence spans 149 residues: Nucleoside diphosphate kinase (149 aa).

The ATP site is built by lysine 9, phenylalanine 57, arginine 85, threonine 91, arginine 102, and asparagine 112. Histidine 115 functions as the Pros-phosphohistidine intermediate in the catalytic mechanism.

The protein belongs to the NDK family. Homotetramer. It depends on Mg(2+) as a cofactor.

The protein localises to the cytoplasm. The catalysed reaction is a 2'-deoxyribonucleoside 5'-diphosphate + ATP = a 2'-deoxyribonucleoside 5'-triphosphate + ADP. It carries out the reaction a ribonucleoside 5'-diphosphate + ATP = a ribonucleoside 5'-triphosphate + ADP. Major role in the synthesis of nucleoside triphosphates other than ATP. The ATP gamma phosphate is transferred to the NDP beta phosphate via a ping-pong mechanism, using a phosphorylated active-site intermediate. The sequence is that of Nucleoside diphosphate kinase from Crocosphaera subtropica (strain ATCC 51142 / BH68) (Cyanothece sp. (strain ATCC 51142)).